Here is a 432-residue protein sequence, read N- to C-terminus: Trigger factor (432 aa).

The region spanning 161–246 (DDRVTIDFVG…LKKIENMVLP (86 aa)) is the PPIase FKBP-type domain.

The protein belongs to the FKBP-type PPIase family. Tig subfamily.

It is found in the cytoplasm. It catalyses the reaction [protein]-peptidylproline (omega=180) = [protein]-peptidylproline (omega=0). Its function is as follows. Involved in protein export. Acts as a chaperone by maintaining the newly synthesized protein in an open conformation. Functions as a peptidyl-prolyl cis-trans isomerase. The sequence is that of Trigger factor from Haemophilus influenzae (strain 86-028NP).